A 360-amino-acid polypeptide reads, in one-letter code: Peptide chain release factor 1 (360 aa).

Position 235 is an N5-methylglutamine (Gln235). Residues 285–313 (KRQQAEASTRRNLLGSGDRSDRNRTYNFP) form a disordered region.

Belongs to the prokaryotic/mitochondrial release factor family. Post-translationally, methylated by PrmC. Methylation increases the termination efficiency of RF1.

The protein resides in the cytoplasm. Functionally, peptide chain release factor 1 directs the termination of translation in response to the peptide chain termination codons UAG and UAA. In Salmonella paratyphi A (strain ATCC 9150 / SARB42), this protein is Peptide chain release factor 1.